We begin with the raw amino-acid sequence, 341 residues long: tRNA N6-adenosine threonylcarbamoyltransferase (341 aa).

His-111 and His-115 together coordinate Fe cation. Substrate-binding positions include 133-137 (AVSGG), Asp-166, Gly-179, Asp-183, and Asn-273. Asp-301 is a Fe cation binding site.

It belongs to the KAE1 / TsaD family. Requires Fe(2+) as cofactor.

It localises to the cytoplasm. It carries out the reaction L-threonylcarbamoyladenylate + adenosine(37) in tRNA = N(6)-L-threonylcarbamoyladenosine(37) in tRNA + AMP + H(+). In terms of biological role, required for the formation of a threonylcarbamoyl group on adenosine at position 37 (t(6)A37) in tRNAs that read codons beginning with adenine. Is involved in the transfer of the threonylcarbamoyl moiety of threonylcarbamoyl-AMP (TC-AMP) to the N6 group of A37, together with TsaE and TsaB. TsaD likely plays a direct catalytic role in this reaction. This is tRNA N6-adenosine threonylcarbamoyltransferase from Geobacter metallireducens (strain ATCC 53774 / DSM 7210 / GS-15).